The chain runs to 718 residues: Threonine--tRNA ligase, mitochondrial (718 aa).

Position 52 is a phosphoserine (serine 52). Positions 55–121 (QKEPRTIKIS…ETDSDLRFLT (67 aa)) constitute a TGS domain.

Belongs to the class-II aminoacyl-tRNA synthetase family. Homodimer.

The protein resides in the mitochondrion matrix. It catalyses the reaction tRNA(Thr) + L-threonine + ATP = L-threonyl-tRNA(Thr) + AMP + diphosphate + H(+). Its function is as follows. Catalyzes the attachment of threonine to tRNA(Thr) in a two-step reaction: threonine is first activated by ATP to form Thr-AMP and then transferred to the acceptor end of tRNA(Thr). Also edits incorrectly charged tRNA(Thr) via its editing domain. The protein is Threonine--tRNA ligase, mitochondrial (TARS2) of Homo sapiens (Human).